Reading from the N-terminus, the 900-residue chain is Alanine--tRNA ligase (900 aa).

Zn(2+) is bound by residues H587, H591, C691, and H695.

The protein belongs to the class-II aminoacyl-tRNA synthetase family. Zn(2+) is required as a cofactor.

The protein resides in the cytoplasm. The enzyme catalyses tRNA(Ala) + L-alanine + ATP = L-alanyl-tRNA(Ala) + AMP + diphosphate. In terms of biological role, catalyzes the attachment of alanine to tRNA(Ala) in a two-step reaction: alanine is first activated by ATP to form Ala-AMP and then transferred to the acceptor end of tRNA(Ala). Also edits incorrectly charged Ser-tRNA(Ala) and Gly-tRNA(Ala) via its editing domain. The polypeptide is Alanine--tRNA ligase (Aeropyrum pernix (strain ATCC 700893 / DSM 11879 / JCM 9820 / NBRC 100138 / K1)).